Reading from the N-terminus, the 274-residue chain is Large ribosomal subunit protein uL2cz/uL2cy (274 aa).

The disordered stretch occupies residues 224-274 (NPVDHPHGGGEGRAPIGRKKPATPWGYPALGRRSRKRNKYSDNLILRRRSK).

This sequence belongs to the universal ribosomal protein uL2 family. Part of the 50S ribosomal subunit.

The protein localises to the plastid. It localises to the chloroplast. This is Large ribosomal subunit protein uL2cz/uL2cy (rpl2-A) from Morus indica (Mulberry).